The sequence spans 307 residues: UDP-3-O-acyl-N-acetylglucosamine deacetylase (307 aa).

His80, His239, and Asp243 together coordinate Zn(2+). Catalysis depends on His266, which acts as the Proton donor.

This sequence belongs to the LpxC family. Zn(2+) serves as cofactor.

The catalysed reaction is a UDP-3-O-[(3R)-3-hydroxyacyl]-N-acetyl-alpha-D-glucosamine + H2O = a UDP-3-O-[(3R)-3-hydroxyacyl]-alpha-D-glucosamine + acetate. It participates in glycolipid biosynthesis; lipid IV(A) biosynthesis; lipid IV(A) from (3R)-3-hydroxytetradecanoyl-[acyl-carrier-protein] and UDP-N-acetyl-alpha-D-glucosamine: step 2/6. Its function is as follows. Catalyzes the hydrolysis of UDP-3-O-myristoyl-N-acetylglucosamine to form UDP-3-O-myristoylglucosamine and acetate, the committed step in lipid A biosynthesis. The polypeptide is UDP-3-O-acyl-N-acetylglucosamine deacetylase (Neisseria meningitidis serogroup C / serotype 2a (strain ATCC 700532 / DSM 15464 / FAM18)).